The primary structure comprises 257 residues: Zinc uptake system ATP-binding protein ZurA (257 aa).

The ABC transporter domain occupies 5-241; that stretch reads IEVNNVSYHY…ADRELEILAE (237 aa). 37–44 contributes to the ATP binding site; sequence GPNGSGKS.

It belongs to the ABC transporter superfamily.

In terms of biological role, involved in a zinc uptake transport system. The polypeptide is Zinc uptake system ATP-binding protein ZurA (zurA) (Listeria innocua serovar 6a (strain ATCC BAA-680 / CLIP 11262)).